The following is a 219-amino-acid chain: Large ribosomal subunit protein uL3 (219 aa).

Residues 124-154 are disordered; sequence FSGSIKRHNQSEGPKSHGSRYHRRPGSMGPI.

Belongs to the universal ribosomal protein uL3 family. In terms of assembly, part of the 50S ribosomal subunit. Forms a cluster with proteins L14 and L19.

Functionally, one of the primary rRNA binding proteins, it binds directly near the 3'-end of the 23S rRNA, where it nucleates assembly of the 50S subunit. This is Large ribosomal subunit protein uL3 from Phytoplasma mali (strain AT).